The primary structure comprises 120 residues: Large ribosomal subunit protein bL12 (120 aa).

It belongs to the bacterial ribosomal protein bL12 family. Homodimer. Part of the ribosomal stalk of the 50S ribosomal subunit. Forms a multimeric L10(L12)X complex, where L10 forms an elongated spine to which 2 to 4 L12 dimers bind in a sequential fashion. Binds GTP-bound translation factors.

Functionally, forms part of the ribosomal stalk which helps the ribosome interact with GTP-bound translation factors. Is thus essential for accurate translation. The chain is Large ribosomal subunit protein bL12 from Lactobacillus acidophilus (strain ATCC 700396 / NCK56 / N2 / NCFM).